The primary structure comprises 1085 residues: Ubiquitin carboxyl-terminal hydrolase 36 (1085 aa).

Over residues 23-36 (GGNSSAAGSSADQA) the composition is skewed to low complexity. 2 disordered regions span residues 23 to 47 (GGNS…GSLQ) and 104 to 149 (KVVG…PKPK). The USP domain occupies 173–481 (TGMINVGNTC…NAYIMFYELD (309 aa)). Cys182 acts as the Nucleophile in catalysis. Catalysis depends on His440, which acts as the Proton acceptor. 4 disordered regions span residues 489–730 (AANR…NNSK), 745–888 (KSAD…ELLK), 963–1030 (EQRQ…FYNQ), and 1043–1085 (KFNR…QQQS). A compositionally biased stretch (low complexity) spans 503-518 (STTPVPATTVSSPSPT). A phosphoserine mark is found at Ser514 and Ser516. Polar residues predominate over residues 532–542 (GYSNGNAQKTA). Low complexity predominate over residues 588–609 (NGNKSSSTSSNNSSSSNHKSIN). The span at 642 to 651 (MTDDHTEKPK) shows a compositional bias: basic and acidic residues. A phosphothreonine mark is found at Thr660 and Thr664. 2 positions are modified to phosphoserine: Ser674 and Ser676. Positions 705–730 (TNGHSKTNGSLTNGSASSSVHVNNSK) are enriched in polar residues. The residue at position 749 (Ser749) is a Phosphoserine. Acidic residues predominate over residues 749–758 (SDDDDDEEES). The span at 768-778 (PQKQSQSQSKA) shows a compositional bias: low complexity. The span at 779-788 (PPSPKTPPSP) shows a compositional bias: pro residues. Ser781 carries the post-translational modification Phosphoserine. At Thr784 the chain carries Phosphothreonine. Ser787 carries the phosphoserine modification. Residues 805–818 (EVDDIDDDDDEEEE) show a composition bias toward acidic residues. Polar residues predominate over residues 822–844 (KIQTPSKTHRNPFSSSKPSTDSP). Thr825 carries the post-translational modification Phosphothreonine. At Ser843 the chain carries Phosphoserine. Position 846 is a phosphothreonine (Thr846). The span at 859-884 (PVKSHQQPRVGNGYQSEATSNGSTIN) shows a compositional bias: polar residues. Composition is skewed to low complexity over residues 987 to 998 (SGSAKGNNASNS) and 1056 to 1066 (QQQRALQRHLA).

This sequence belongs to the peptidase C19 family. As to quaternary structure, interacts with atms/PAF1, but not with CycT.

It is found in the nucleus. It localises to the nucleolus. The enzyme catalyses Thiol-dependent hydrolysis of ester, thioester, amide, peptide and isopeptide bonds formed by the C-terminal Gly of ubiquitin (a 76-residue protein attached to proteins as an intracellular targeting signal).. Required for maintaining multiple types of adult stem cells, including male and female germline, epithelial follicle cell and intestinal stem cells. May function as a transcriptional repressor by continually deubiquiting histone H2B at the promoters of genes critical for cellular differentiation, thereby preventing histone H3 'Lys-4' trimethylation (H3K4). Controls selective autophagy activation by ubiquitinated proteins. This Drosophila erecta (Fruit fly) protein is Ubiquitin carboxyl-terminal hydrolase 36 (Usp36).